Consider the following 1969-residue polypeptide: Hybrid signal transduction histidine kinase B (1969 aa).

Residues 1 to 10 (MEKSEQTNSF) show a composition bias toward polar residues. Disordered stretches follow at residues 1–91 (MEKS…HETK), 218–335 (KINE…KTKQ), 412–436 (QQQQ…SSDK), 468–505 (NNIN…KNKL), and 551–598 (GSGG…YNNN). Over residues 11 to 55 (ESSNNNNNNIDSNINNNLENNNNKNNNNNNNNNNNNNNNNNNIEN) the composition is skewed to low complexity. Positions 56–65 (SIDKNNKEDN) are enriched in basic and acidic residues. Residues 72–86 (SHRKHRTRLKSKKGN) show a composition bias toward basic residues. Over residues 242–252 (TNSSILKSSEQ) the composition is skewed to polar residues. A compositionally biased stretch (low complexity) spans 280-292 (SSSSDEGSDNSKS). Polar residues predominate over residues 293 to 304 (QHSSVNTPTLSR). Residues 313-335 (SQQSQKQSQQQSQQPQQQNKTKQ) show a composition bias toward low complexity. The span at 416 to 425 (QHHRHYHHHI) shows a compositional bias: basic residues. The segment covering 469–492 (NINIQAPSTPVQSRNYPLFTTQSP) has biased composition (polar residues). Positions 551–571 (GSGGGGSGGGGGGGGGGGGIG) are enriched in gly residues. The segment covering 574–598 (SSFLDDNNNLNNGENFKNSNSYNNN) has biased composition (low complexity). 5 consecutive transmembrane segments (helical) span residues 660-680 (AYIL…STIL), 684-704 (EWFI…LGKI), 708-728 (MYLI…TSII), 747-767 (LVMI…VILI), and 795-815 (FGEL…YTIL). Residues 967 to 1188 (TVSHELRTPI…TFSFTIPCGI (222 aa)) enclose the Histidine kinase domain. A Phosphohistidine; by autocatalysis modification is found at His970. Disordered regions lie at residues 1359-1415 (ASKD…HQLI), 1521-1563 (GIAL…TTQS), 1617-1709 (NNNF…SSHS), and 1755-1832 (QKPQ…TAAA). Positions 1373-1398 (GDGGRSLSGGGGGVGSNGNGNGGGGL) are enriched in gly residues. Low complexity-rich tracts occupy residues 1399–1410 (DSNISPSELSSS) and 1527–1549 (SSSK…SPNS). 2 stretches are compositionally biased toward polar residues: residues 1554 to 1563 (ELGNGKTTQS) and 1626 to 1665 (KPST…SPHR). 2 stretches are compositionally biased toward low complexity: residues 1755–1774 (QKPQ…TSTQ) and 1781–1821 (KTTT…TTTT). The Response regulatory domain maps to 1840–1967 (KILLVEDNFV…DILIQMIKKH (128 aa)). Asp1889 bears the 4-aspartylphosphate mark.

The protein resides in the membrane. It catalyses the reaction ATP + protein L-histidine = ADP + protein N-phospho-L-histidine.. Its function is as follows. Acts in the cytokinin signal transduction pathway that regulates spore germination. Required for the maintenance of spore dormancy. Does not appear to act as a cytokinin receptor. Probably undergoes ATP-dependent autophosphorylation at a conserved histidine residue in the kinase core, which is followed by transfer of the phosphoryl group to a conserved aspartate residue in the receiver domain. The sequence is that of Hybrid signal transduction histidine kinase B (dhkB) from Dictyostelium discoideum (Social amoeba).